We begin with the raw amino-acid sequence, 341 residues long: Methionine import ATP-binding protein MetN 2 (341 aa).

One can recognise an ABC transporter domain in the interval 2 to 241 (INLQNVSKIY…PKEEMTKRFV (240 aa)). 38–45 (GYSGAGKS) contributes to the ATP binding site.

This sequence belongs to the ABC transporter superfamily. Methionine importer (TC 3.A.1.24) family. As to quaternary structure, the complex is composed of two ATP-binding proteins (MetN), two transmembrane proteins (MetI) and a solute-binding protein (MetQ).

It is found in the cell membrane. It catalyses the reaction L-methionine(out) + ATP + H2O = L-methionine(in) + ADP + phosphate + H(+). The enzyme catalyses D-methionine(out) + ATP + H2O = D-methionine(in) + ADP + phosphate + H(+). In terms of biological role, part of the ABC transporter complex MetNIQ involved in methionine import. Responsible for energy coupling to the transport system. The protein is Methionine import ATP-binding protein MetN 2 of Bacillus licheniformis (strain ATCC 14580 / DSM 13 / JCM 2505 / CCUG 7422 / NBRC 12200 / NCIMB 9375 / NCTC 10341 / NRRL NRS-1264 / Gibson 46).